A 77-amino-acid chain; its full sequence is Large ribosomal subunit protein bL28 (77 aa).

The protein belongs to the bacterial ribosomal protein bL28 family.

The polypeptide is Large ribosomal subunit protein bL28 (Ralstonia pickettii (strain 12J)).